The following is a 424-amino-acid chain: MSEQEKTPPAAAEPQPPVDNKPTDAPAQPEHPPTDGNDKTEQPATEAAPAEAPTEQPKQDDAAQPADNKPDYLAKNPALSEFFDRLPAILSSAGHNEMWGVTLRDSADVPTVNVMIKFLRANEGNVKQAEDQLIKALQWRKEMDPTALVDTASYSASKFGGLGYLTTYQDANGKETVVTWNIYGAVKKIDETFGNMDEFLKWRVALMEMAVKELKMDQATTVMDYNADEDPYQMLQVHDYLNVSFLRINPNLRAATKKTIEVFAMAYPELLREKFFVNVPAIMGWMFAAMKVFLSKNTTRKFHPISNGANLAREFPSPLKDQFPKAYGGNGPALQDNARTVNLVADPEPAQEASKDEAQEAPKDAPKEEPKEEPKEEPKEEPKEEPKEEPKEESKAETTQESADAPEKNDAAVTEAPAPAAEAK.

The segment at 1 to 74 (MSEQEKTPPA…PADNKPDYLA (74 aa)) is disordered. Positions 32-41 (PPTDGNDKTE) are enriched in basic and acidic residues. A compositionally biased stretch (low complexity) spans 42-56 (QPATEAAPAEAPTEQ). Residues 152–335 (ASYSASKFGG…AYGGNGPALQ (184 aa)) form the CRAL-TRIO domain. Heme-binding residues include Tyr-183, Arg-203, His-238, Tyr-240, and Lys-274. Residues 348-424 (EPAQEASKDE…EAPAPAAEAK (77 aa)) form a disordered region. Basic and acidic residues predominate over residues 353-398 (ASKDEAQEAPKDAPKEEPKEEPKEEPKEEPKEEPKEEPKEESKAET). Over residues 411 to 424 (AAVTEAPAPAAEAK) the composition is skewed to low complexity.

Belongs to the SFH5 family. The cofactor is heme b.

It is found in the cytoplasm. It localises to the endoplasmic reticulum membrane. The protein localises to the microsome membrane. The catalysed reaction is a 1,2-diacyl-sn-glycero-3-phospho-(1D-myo-inositol)(in) = a 1,2-diacyl-sn-glycero-3-phospho-(1D-myo-inositol)(out). In terms of biological role, non-classical phosphatidylinositol (PtdIns) transfer protein (PITP), which exhibits PtdIns-binding/transfer activity in the absence of detectable PtdCho-binding/transfer activity. Regulates PtdIns(4,5)P2 homeostasis at the plasma membrane. Heme-binding protein that may play a role in organic oxidant-induced stress responses. This is Phosphatidylinositol transfer protein sfh5 (sfh5) from Aspergillus terreus (strain NIH 2624 / FGSC A1156).